Here is a 397-residue protein sequence, read N- to C-terminus: Arginine biosynthesis bifunctional protein ArgJ (397 aa).

Residues T143, K169, T180, E266, N392, and T397 each contribute to the substrate site. T180 functions as the Nucleophile in the catalytic mechanism.

Belongs to the ArgJ family. As to quaternary structure, heterotetramer of two alpha and two beta chains.

The protein localises to the cytoplasm. The enzyme catalyses N(2)-acetyl-L-ornithine + L-glutamate = N-acetyl-L-glutamate + L-ornithine. It carries out the reaction L-glutamate + acetyl-CoA = N-acetyl-L-glutamate + CoA + H(+). Its pathway is amino-acid biosynthesis; L-arginine biosynthesis; L-ornithine and N-acetyl-L-glutamate from L-glutamate and N(2)-acetyl-L-ornithine (cyclic): step 1/1. It functions in the pathway amino-acid biosynthesis; L-arginine biosynthesis; N(2)-acetyl-L-ornithine from L-glutamate: step 1/4. Its activity is regulated as follows. Competitively inhibited by L-ornithine. Catalyzes two activities which are involved in the cyclic version of arginine biosynthesis: the synthesis of N-acetylglutamate from glutamate and acetyl-CoA as the acetyl donor, and of ornithine by transacetylation between N(2)-acetylornithine and glutamate. In Thermotoga neapolitana (strain ATCC 49049 / DSM 4359 / NBRC 107923 / NS-E), this protein is Arginine biosynthesis bifunctional protein ArgJ.